We begin with the raw amino-acid sequence, 439 residues long: ATP-dependent protease ATPase subunit HslU (439 aa).

ATP contacts are provided by residues I17, 59-64 (GVGKTE), D251, E317, and R389.

The protein belongs to the ClpX chaperone family. HslU subfamily. As to quaternary structure, a double ring-shaped homohexamer of HslV is capped on each side by a ring-shaped HslU homohexamer. The assembly of the HslU/HslV complex is dependent on binding of ATP.

It is found in the cytoplasm. Its function is as follows. ATPase subunit of a proteasome-like degradation complex; this subunit has chaperone activity. The binding of ATP and its subsequent hydrolysis by HslU are essential for unfolding of protein substrates subsequently hydrolyzed by HslV. HslU recognizes the N-terminal part of its protein substrates and unfolds these before they are guided to HslV for hydrolysis. The chain is ATP-dependent protease ATPase subunit HslU from Campylobacter jejuni (strain RM1221).